A 529-amino-acid polypeptide reads, in one-letter code: Bifunctional purine biosynthesis protein PurH (529 aa).

Positions 3–149 (DRIPLKRALI…KNHAFVTVVV (147 aa)) constitute an MGS-like domain.

This sequence belongs to the PurH family.

The enzyme catalyses (6R)-10-formyltetrahydrofolate + 5-amino-1-(5-phospho-beta-D-ribosyl)imidazole-4-carboxamide = 5-formamido-1-(5-phospho-D-ribosyl)imidazole-4-carboxamide + (6S)-5,6,7,8-tetrahydrofolate. The catalysed reaction is IMP + H2O = 5-formamido-1-(5-phospho-D-ribosyl)imidazole-4-carboxamide. Its pathway is purine metabolism; IMP biosynthesis via de novo pathway; 5-formamido-1-(5-phospho-D-ribosyl)imidazole-4-carboxamide from 5-amino-1-(5-phospho-D-ribosyl)imidazole-4-carboxamide (10-formyl THF route): step 1/1. It participates in purine metabolism; IMP biosynthesis via de novo pathway; IMP from 5-formamido-1-(5-phospho-D-ribosyl)imidazole-4-carboxamide: step 1/1. This chain is Bifunctional purine biosynthesis protein PurH, found in Paracoccus denitrificans (strain Pd 1222).